Consider the following 238-residue polypeptide: MGRKWNNIKEKKAQKDKNTSRIYAKFGKEIYVAAKSGEPDPESNQALRLTLERAKTYSVPNHIIEKAIEKAKGSGEENYDELRYEGFGPSGSMIIVDALTDNVNRTASDVRSAFGKNGGNMGVSGSVAYMFEYTAVFGIEDKSADDILESLMEQDIDVRDVIDENGLTIVYAEPDQFAQVQDALRETGVDTFKVAEFEMLPQTDIELSAEDQETFETLVEALEDLDDVQNVFHNVDLK.

The protein belongs to the TACO1 family. YeeN subfamily.

The protein localises to the cytoplasm. In Staphylococcus saprophyticus subsp. saprophyticus (strain ATCC 15305 / DSM 20229 / NCIMB 8711 / NCTC 7292 / S-41), this protein is Probable transcriptional regulatory protein SSP2054.